An 816-amino-acid chain; its full sequence is Cation/H(+) antiporter 8 (816 aa).

12 helical membrane passes run 64-84, 97-117, 127-147, 163-183, 197-214, 227-247, 255-275, 297-317, 343-363, 382-402, 413-433, and 447-467; these read PKLE…NILF, MMLA…NSII, IDVA…LKGV, VTGV…FNLK, VMLL…ARLL, VALS…IANV, ADGL…FAVV, IHGV…LSQF, LESF…MLRT, FAVA…SVIV, SIIL…FYLF, and ILVL…GFLY.

The protein belongs to the monovalent cation:proton antiporter 2 (CPA2) transporter (TC 2.A.37) family. CHX (TC 2.A.37.4) subfamily. In terms of tissue distribution, specifically expressed in pollen.

Its subcellular location is the membrane. In terms of biological role, may operate as a cation/H(+) antiporter. The chain is Cation/H(+) antiporter 8 (CHX8) from Arabidopsis thaliana (Mouse-ear cress).